Here is a 395-residue protein sequence, read N- to C-terminus: Nickel and cobalt resistance protein CnrB (395 aa).

The chain crosses the membrane as a helical span at residues 13-33; it reads MIAGVAAVAAAVGFGAAHLPV. The interval 35–55 is disordered; sequence EKSPASTQAPEAQKPQSAPVK. Residues 37–50 are compositionally biased toward polar residues; sequence SPASTQAPEAQKPQ. The stretch at 140–193 forms a coiled coil; that stretch reads AAERKVAQAKADLARKTYEREASLFQQGVTPRQEMEAAKAALDVAQAEALRAAT.

The protein belongs to the membrane fusion protein (MFP) (TC 8.A.1) family.

It is found in the cell inner membrane. In terms of biological role, the products of the genes cnrA, cnrB, and cnrC are likely to form a membrane-bound protein complex catalyzing an energy-dependent efflux of Ni(2+) and Co(2+). The mechanism of action of the CnrCBA complex may be that of a proton/cation antiporter. In Cupriavidus metallidurans (strain ATCC 43123 / DSM 2839 / NBRC 102507 / CH34) (Ralstonia metallidurans), this protein is Nickel and cobalt resistance protein CnrB (cnrB).